A 397-amino-acid polypeptide reads, in one-letter code: uncharacterized protein (397 aa).

Transmembrane regions (helical) follow at residues phenylalanine 10–methionine 30, glycine 48–isoleucine 68, proline 76–proline 96, isoleucine 106–methionine 126, glycine 141–leucine 161, alanine 165–valine 185, leucine 209–isoleucine 229, valine 242–alanine 262, methionine 274–tyrosine 294, alanine 296–leucine 316, valine 334–leucine 354, and leucine 363–leucine 383.

The protein belongs to the major facilitator superfamily.

It localises to the cell membrane. This is an uncharacterized protein from Bacillus subtilis (strain 168).